The following is a 331-amino-acid chain: L-lactate dehydrogenase A chain (331 aa).

Residues 29–57 and Arg-98 each bind NAD(+); that span reads GMVG…MEDK. Residues Arg-105, Asn-137, and Arg-168 each contribute to the substrate site. Residue Asn-137 participates in NAD(+) binding. The Proton acceptor role is filled by His-192. Thr-247 contacts substrate.

This sequence belongs to the LDH/MDH superfamily. LDH family. Homotetramer.

Its subcellular location is the cytoplasm. The catalysed reaction is (S)-lactate + NAD(+) = pyruvate + NADH + H(+). It participates in fermentation; pyruvate fermentation to lactate; (S)-lactate from pyruvate: step 1/1. Interconverts simultaneously and stereospecifically pyruvate and lactate with concomitant interconversion of NADH and NAD(+). This chain is L-lactate dehydrogenase A chain (ldha), found in Notothenia neglecta (Yellowbelly rockcod).